Here is a 131-residue protein sequence, read N- to C-terminus: Histone H3-like 4 (131 aa).

The residue at position 10 (Lys10) is an N6,N6,N6-trimethyllysine; alternate. Lys10 is subject to N6,N6-dimethyllysine; alternate. Lys10 carries the N6-acetyllysine; alternate modification. At Lys10 the chain carries N6-methyllysine; alternate. Residue Thr12 is modified to Phosphothreonine. Lys15 is subject to N6-acetyllysine. A Phosphoserine modification is found at Ser27. Lys32 carries the N6,N6,N6-trimethyllysine; alternate modification. Lys32 bears the N6,N6-dimethyllysine; alternate mark. An N6-methyllysine; alternate modification is found at Lys32.

This sequence belongs to the histone H3 family. The nucleosome is a histone octamer containing two molecules each of H2A, H2B, H3 and H4 assembled in one H3-H4 heterotetramer and two H2A-H2B heterodimers. The octamer wraps approximately 147 bp of DNA. Expressed in roots, seedlings, leaves buds and open flowers.

It localises to the nucleus. Its subcellular location is the chromosome. In terms of biological role, core component of nucleosome. Nucleosomes wrap and compact DNA into chromatin, limiting DNA accessibility to the cellular machineries which require DNA as a template. Histones thereby play a central role in transcription regulation, DNA repair, DNA replication and chromosomal stability. DNA accessibility is regulated via a complex set of post-translational modifications of histones, also called histone code, and nucleosome remodeling. The sequence is that of Histone H3-like 4 from Arabidopsis thaliana (Mouse-ear cress).